The sequence spans 279 residues: Coiled-coil domain-containing protein 106 (279 aa).

A coiled-coil region spans residues 62 to 101 (KAQLHMALERNSWLQKRIEDLEEERDFLRCQLDKFISSAR). The span at 109 to 121 (RMKPGPRRVDGDS) shows a compositional bias: basic and acidic residues. The interval 109 to 173 (RMKPGPRRVD…FGKTKARERQ (65 aa)) is disordered. A Phosphoserine modification is found at Ser-129. The Bipartite nuclear localization signal motif lies at 151–164 (KRQKQKGSTSRKRF). Basic residues predominate over residues 151–167 (KRQKQKGSTSRKRFGKT).

As to quaternary structure, interacts with p53/TP53.

It is found in the nucleus. Its function is as follows. Promotes the degradation of p53/TP53 protein and inhibits its transactivity. This chain is Coiled-coil domain-containing protein 106 (Ccdc106), found in Mus musculus (Mouse).